The following is a 61-amino-acid chain: Small ribosomal subunit protein uS14 (61 aa).

Positions 24, 27, 40, and 43 each coordinate Zn(2+).

This sequence belongs to the universal ribosomal protein uS14 family. Zinc-binding uS14 subfamily. In terms of assembly, part of the 30S ribosomal subunit. Contacts proteins S3 and S10. The cofactor is Zn(2+).

Its function is as follows. Binds 16S rRNA, required for the assembly of 30S particles and may also be responsible for determining the conformation of the 16S rRNA at the A site. The sequence is that of Small ribosomal subunit protein uS14 from Chloroflexus aurantiacus (strain ATCC 29364 / DSM 637 / Y-400-fl).